Reading from the N-terminus, the 420-residue chain is 2',3'-cyclic-nucleotide 3'-phosphodiesterase (420 aa).

Residue S9 is modified to Phosphoserine. Phosphotyrosine is present on Y110. Phosphoserine is present on residues S169, S227, and S239. H250 acts as the Proton acceptor in catalysis. Residue T252 coordinates substrate. The residue at position 262 (T262) is a Phosphothreonine. The Proton donor role is filled by H329. A substrate-binding site is contributed by T331. Position 358 is a phosphoserine (S358). A Cysteine methyl ester modification is found at C417. The S-farnesyl cysteine moiety is linked to residue C417. Positions 418-420 are cleaved as a propeptide — removed in mature form; it reads TII.

Belongs to the 2H phosphoesterase superfamily. CNPase family. Exists as monomers and homodimers.

The protein resides in the membrane. The protein localises to the melanosome. The catalysed reaction is a nucleoside 2',3'-cyclic phosphate + H2O = a nucleoside 2'-phosphate + H(+). Catalyzes the formation of 2'-nucleotide products from 2',3'-cyclic substrates. May participate in RNA metabolism in the myelinating cell, CNP is the third most abundant protein in central nervous system myelin. The chain is 2',3'-cyclic-nucleotide 3'-phosphodiesterase from Rattus norvegicus (Rat).